The sequence spans 423 residues: GPI mannosyltransferase 2 (423 aa).

A run of 9 helical transmembrane segments spans residues 11 to 31 (ILSL…IALG), 106 to 126 (WEAL…VLAL), 139 to 159 (LAYL…ISAP), 160 to 180 (YAES…AISL), 197 to 219 (GLSY…LFAV), 240 to 260 (LVAP…PQVL), 299 to 319 (YWTP…TILL), 351 to 371 (LAAI…VQII), and 400 to 420 (GVIV…ASFL).

The protein belongs to the PIGV family.

It localises to the endoplasmic reticulum membrane. It functions in the pathway glycolipid biosynthesis; glycosylphosphatidylinositol-anchor biosynthesis. Its function is as follows. Mannosyltransferase involved in glycosylphosphatidylinositol-anchor biosynthesis. Transfers the second mannose to the glycosylphosphatidylinositol during GPI precursor assembly. In Gibberella zeae (strain ATCC MYA-4620 / CBS 123657 / FGSC 9075 / NRRL 31084 / PH-1) (Wheat head blight fungus), this protein is GPI mannosyltransferase 2 (GPI18).